We begin with the raw amino-acid sequence, 427 residues long: Enolase (427 aa).

Position 163 (Gln-163) interacts with (2R)-2-phosphoglycerate. The active-site Proton donor is the Glu-205. Mg(2+)-binding residues include Asp-242, Glu-285, and Asp-312. The (2R)-2-phosphoglycerate site is built by Lys-337, Arg-366, Ser-367, and Lys-388. Lys-337 serves as the catalytic Proton acceptor.

This sequence belongs to the enolase family. Requires Mg(2+) as cofactor.

It localises to the cytoplasm. Its subcellular location is the secreted. The protein localises to the cell surface. It carries out the reaction (2R)-2-phosphoglycerate = phosphoenolpyruvate + H2O. It participates in carbohydrate degradation; glycolysis; pyruvate from D-glyceraldehyde 3-phosphate: step 4/5. In terms of biological role, catalyzes the reversible conversion of 2-phosphoglycerate (2-PG) into phosphoenolpyruvate (PEP). It is essential for the degradation of carbohydrates via glycolysis. This Methylocella silvestris (strain DSM 15510 / CIP 108128 / LMG 27833 / NCIMB 13906 / BL2) protein is Enolase.